Reading from the N-terminus, the 1247-residue chain is uncharacterized protein (1247 aa).

8 disordered regions span residues 25-141 (KYNN…HSPP), 169-431 (AANN…QQPQ), 472-667 (QQQP…PSSS), 738-770 (NSNS…SEPI), 807-857 (YSNR…QNIE), 869-1087 (GKNF…NNNN), 1099-1122 (STLN…ESQQ), and 1139-1162 (QQQQ…KGDG). Low complexity predominate over residues 26 to 125 (YNNSNNYNNN…SNNSINSNSY (100 aa)). Polar residues predominate over residues 126–139 (KVNTPTQNGKSSHS). Low complexity-rich tracts occupy residues 169-178 (AANNGSSNSS), 185-223 (SNSN…NYNS), and 230-341 (NNNN…YSNS). Over residues 342-356 (KYNQQKSYNNAPHQL) the composition is skewed to polar residues. Low complexity-rich tracts occupy residues 363 to 375 (NSYY…NNGN), 385 to 394 (GSGNSSNSNG), 409 to 431 (QSQS…QQPQ), and 472 to 484 (QQQP…QQQQ). Residues 511 to 522 (GLNNSLNGQTDL) are compositionally biased toward polar residues. Low complexity-rich tracts occupy residues 523-544 (NNSN…TNNN), 553-628 (YNYN…VGSN), 655-667 (TPSS…PSSS), 738-759 (NSNS…NNNH), 807-855 (YSNR…DSQN), and 871-928 (NFNN…ENNN). Positions 929 to 942 (GDVFSNGFSTWTPK) are enriched in polar residues. Positions 943–983 (SGSNSLNNSQNNLSNGQNSSNNSQNNLNNSQNSLNSSGNHH) are enriched in low complexity. A compositionally biased stretch (basic residues) spans 984–995 (SNYHGHNNHHHY). Positions 996-1021 (NNNNNNNNNNNNNNNNNNNNNNNGNG) are enriched in low complexity. Residues 1026 to 1044 (YYNNKYQQKSPQHQSSNSV) are compositionally biased toward polar residues. Residues 1047 to 1060 (IPPPGFSTIAPPPG) show a composition bias toward pro residues. Residues 1064 to 1087 (NNNNNNNNNNNNNNNKNNNSNNNN) show a composition bias toward low complexity. The segment covering 1099 to 1108 (STLNNSQDDS) has biased composition (polar residues). Positions 1110-1122 (QQEQEQQEQESQQ) are enriched in low complexity.

This is an uncharacterized protein from Dictyostelium discoideum (Social amoeba).